We begin with the raw amino-acid sequence, 84 residues long: MSKNTINLQDNVLNQVRKNKITVTIFLVNGYKIRGLIKSFDNFTLLMEVNGEQQMIYKHAVSTIIPGKTLNLFSDQSDKNDQEQ.

Residues 10-70 form the Sm domain; that stretch reads DNVLNQVRKN…VSTIIPGKTL (61 aa).

The protein belongs to the Hfq family. As to quaternary structure, homohexamer.

In terms of biological role, RNA chaperone that binds small regulatory RNA (sRNAs) and mRNAs to facilitate mRNA translational regulation in response to envelope stress, environmental stress and changes in metabolite concentrations. Also binds with high specificity to tRNAs. The protein is RNA-binding protein Hfq of Natranaerobius thermophilus (strain ATCC BAA-1301 / DSM 18059 / JW/NM-WN-LF).